The following is a 97-amino-acid chain: Small ribosomal subunit protein bS6 (97 aa).

This sequence belongs to the bacterial ribosomal protein bS6 family.

Its function is as follows. Binds together with bS18 to 16S ribosomal RNA. This chain is Small ribosomal subunit protein bS6, found in Syntrophomonas wolfei subsp. wolfei (strain DSM 2245B / Goettingen).